The sequence spans 143 residues: Hemoglobin subunit alpha-2 (143 aa).

An N-acetylserine modification is found at serine 2. One can recognise a Globin domain in the interval 2 to 143; it reads SLTEKDKAAV…LSLALAEKYR (142 aa). Histidine 60 contacts O2. A heme b-binding site is contributed by histidine 89.

This sequence belongs to the globin family. Hb2 is a heterotetramer of two alpha-2 chains and two beta-1 chains; Hb3 is a heterotetramer of two alpha-2 chains and two beta-2 chains. Red blood cells.

Functionally, involved in oxygen transport from gills to the various peripheral tissues. This Anarhichas minor (Arctic spotted wolffish) protein is Hemoglobin subunit alpha-2 (hba2).